The primary structure comprises 841 residues: Neuronal tyrosine-phosphorylated phosphoinositide-3-kinase adapter 1 (841 aa).

5 disordered regions span residues 1–45 (MNLL…PGVR), 64–448 (PASQ…PAAL), 655–679 (RAWN…TSGI), 745–769 (RPCS…PLPP), and 812–833 (LPSW…RRQH). The segment covering 8-25 (TKLEWRQHKEEEAKRSSS) has biased composition (basic and acidic residues). Residues 26 to 39 (KEVAPAGSAGPAAG) show a composition bias toward low complexity. An involved in CYFIP1- and NCKAP1-binding region spans residues 76-186 (SAMAPRSLSC…DESCPPGPSP (111 aa)). Residues 94-103 (VGGGPGGASG) show a composition bias toward gly residues. The span at 114–123 (PPAKPRRHPS) shows a compositional bias: basic residues. Residues 167–176 (SPNTQLSVSF) show a composition bias toward polar residues. Residues 224–243 (FRGGGRSGGGLAGPPLGGGG) are compositionally biased toward gly residues. A compositionally biased stretch (acidic residues) spans 252–261 (SDSEESEAIY). The span at 279–295 (GPPPLTATSPPQQPHAL) shows a compositional bias: pro residues. The segment covering 759-769 (PALPLPLPLPP) has biased composition (pro residues).

This sequence belongs to the NYAP family. Interacts with ACOT9, ARHGAP26 and PIK3R2. Interacts with components of the WAVE1 complex, CYFIP1 and NCKAP1; this interaction mediates PI3K-WAVE1 association and actin cytoskeleton remodeling. Post-translationally, phosphorylated on tyrosine residues by FYN upon stimulation with CNTN5.

Activates PI3K and concomitantly recruits the WAVE1 complex to the close vicinity of PI3K and regulates neuronal morphogenesis. The polypeptide is Neuronal tyrosine-phosphorylated phosphoinositide-3-kinase adapter 1 (NYAP1) (Homo sapiens (Human)).